A 603-amino-acid chain; its full sequence is Rab proteins geranylgeranyltransferase component A (603 aa).

Serine 470 carries the post-translational modification Phosphoserine.

It belongs to the Rab GDI family.

In terms of biological role, substrate-binding subunit (component A) of the Rab geranylgeranyltransferase (GGTase) complex. Binds unprenylated Rab proteins and presents the substrate peptide to the catalytic component B. The component A is thought to be regenerated by transferring its prenylated Rab back to the donor membrane. The protein is Rab proteins geranylgeranyltransferase component A (MRS6) of Saccharomyces cerevisiae (strain ATCC 204508 / S288c) (Baker's yeast).